The following is a 308-amino-acid chain: Isochorismatase domain-containing protein 1 (308 aa).

It belongs to the isochorismatase family.

This is Isochorismatase domain-containing protein 1 (isoc1) from Xenopus tropicalis (Western clawed frog).